We begin with the raw amino-acid sequence, 279 residues long: HTH-type transcriptional activator RhaS (279 aa).

The 99-residue stretch at 175 to 273 (QALLGWLQNN…SQAPKSLRHQ (99 aa)) folds into the HTH araC/xylS-type domain. 2 DNA-binding regions (H-T-H motif) span residues 192-213 (GGLADQFSLPLRTLHRQLKQHT) and 240-263 (ITTIAHACGFSDSNHFSTQFRKAF).

Binds DNA as a dimer.

Its subcellular location is the cytoplasm. Activates expression of the rhaBAD and rhaT operons. This is HTH-type transcriptional activator RhaS from Pectobacterium atrosepticum (strain SCRI 1043 / ATCC BAA-672) (Erwinia carotovora subsp. atroseptica).